A 1287-amino-acid polypeptide reads, in one-letter code: Pullulanase A (1287 aa).

The signal sequence occupies residues 1 to 44 (MRKTPSHTEKKMVYSIRSLKNGTGSVLIGASLVLLAMATPTISS). The interval 42–139 (ISSDESTPTT…VTTETKAEEP (98 aa)) is disordered. Residues 48 to 61 (TPTTNEPNNRNTTT) show a composition bias toward low complexity. A compositionally biased stretch (polar residues) spans 79–90 (DISSPGNANASL). Composition is skewed to low complexity over residues 99–113 (TEPT…DPAP) and 122–133 (EPTTSTSPVTTE). Residues 163-165 (WTW), Trp175, Asp221, 270-272 (WYW), Trp283, Lys325, and Asn330 each bind substrate. Residues Ser668 and Tyr670 each contribute to the Ca(2+) site. Substrate is bound by residues 674–675 (YD) and Phe750. Asp785 acts as the Nucleophile in catalysis. The Proton donor role is filled by Glu814. Position 816 (Trp816) interacts with substrate. 3 residues coordinate Ca(2+): Met835, Thr838, and Asp839. 3 residues coordinate substrate: Asp846, Arg849, and Tyr856. 2 residues coordinate Ca(2+): Asp889 and Asp893. Substrate is bound by residues Asn903, Lys976, and 996–998 (DSY). Asp999 lines the Ca(2+) pocket. A disordered region spans residues 1147–1255 (VSQNGTSHES…TPDRQAELPN (109 aa)). Basic and acidic residues predominate over residues 1156-1203 (STAEEKPDSTPSKPEHQNEASHPAHQDPAPEARPDSTKPDAKVADAEN). Positions 1212 to 1225 (SQAEQPAQEAQASS) are enriched in low complexity. Residues 1228-1239 (EAVRKESVENSS) show a composition bias toward basic and acidic residues. The short motif at 1253–1257 (LPNTG) is the LPXTG sorting signal element. Thr1256 is subject to Pentaglycyl murein peptidoglycan amidated threonine. A propeptide spans 1257–1287 (GIKNENKLLFAGISLLALLGLGFLLKNKKEN) (removed by sortase).

This sequence belongs to the glycosyl hydrolase 13 family.

It localises to the secreted. The protein localises to the cell wall. Its subcellular location is the cell surface. It catalyses the reaction Hydrolysis of (1-&gt;6)-alpha-D-glucosidic linkages in pullulan, amylopectin and glycogen, and in the alpha- and beta-limit dextrins of amylopectin and glycogen.. Inhibited by 4-O-alpha-D-glucopyranosylmoranoline (G1M). In terms of biological role, virulence factor. Involved in the degradation of glycogen of the mammalian host cells. Hydrolyzes the alpha-1,6-branchpoints of glycogen. Hydrolyzes pullulan. Does not hydrolyze dextran. Binds to mouse lung alveolar type II cells that are rich in glycogen stores. Is an alpha-glucan-specific carbohydrate-binding protein, which binds to amylose (pure alpha-(1,4)-linked glucose), amylopectin (alpha-(1,4)-linked glucose with alpha-(1,6) branch points), pullulan (linear polymer of mixed alpha-(1,4)- and alpha-(1,6)-linked glucose) and glycogen (similar to amylopectin with more frequent alpha-(1,6) branch points) in vitro. Does not bind to dextran (a linear polymer of alpha-(1,6)-linked glucose). The polypeptide is Pullulanase A (Streptococcus pneumoniae).